Reading from the N-terminus, the 410-residue chain is Arginine deiminase (410 aa).

The Amidino-cysteine intermediate role is filled by C398.

Belongs to the arginine deiminase family.

Its subcellular location is the cytoplasm. The catalysed reaction is L-arginine + H2O = L-citrulline + NH4(+). It functions in the pathway amino-acid degradation; L-arginine degradation via ADI pathway; carbamoyl phosphate from L-arginine: step 1/2. This Limosilactobacillus reuteri (strain DSM 20016) (Lactobacillus reuteri) protein is Arginine deiminase.